The sequence spans 427 residues: Serine--tRNA ligase (427 aa).

229–231 contacts L-serine; that stretch reads TAE. 260-262 contacts ATP; that stretch reads RSE. Residue glutamate 283 participates in L-serine binding. Residue 347–350 participates in ATP binding; sequence EISS. Residue serine 383 participates in L-serine binding.

This sequence belongs to the class-II aminoacyl-tRNA synthetase family. Type-1 seryl-tRNA synthetase subfamily. Homodimer. The tRNA molecule binds across the dimer.

The protein resides in the cytoplasm. The catalysed reaction is tRNA(Ser) + L-serine + ATP = L-seryl-tRNA(Ser) + AMP + diphosphate + H(+). It carries out the reaction tRNA(Sec) + L-serine + ATP = L-seryl-tRNA(Sec) + AMP + diphosphate + H(+). It functions in the pathway aminoacyl-tRNA biosynthesis; selenocysteinyl-tRNA(Sec) biosynthesis; L-seryl-tRNA(Sec) from L-serine and tRNA(Sec): step 1/1. In terms of biological role, catalyzes the attachment of serine to tRNA(Ser). Is also able to aminoacylate tRNA(Sec) with serine, to form the misacylated tRNA L-seryl-tRNA(Sec), which will be further converted into selenocysteinyl-tRNA(Sec). The protein is Serine--tRNA ligase of Nitrosococcus oceani (strain ATCC 19707 / BCRC 17464 / JCM 30415 / NCIMB 11848 / C-107).